Reading from the N-terminus, the 911-residue chain is Transferrin-binding protein A (911 aa).

A signal peptide spans 1 to 24 (MQQQHLFRLNILCLSLMTALPAYA). Positions 38 to 45 (DTIQVKAK) match the TonB box motif. Positions 51-176 (RDNEVTGLGK…LAGSVAFQTK (126 aa)) constitute a TBDR plug domain. The TBDR beta-barrel domain occupies 187–911 (QWGIQSKTAY…NYTFSLEMKF (725 aa)). The short motif at 894–911 (NRYAAPGRNYTFSLEMKF) is the TonB C-terminal box element.

It belongs to the TonB-dependent receptor family. As to quaternary structure, binds both human apo- and holo-transferrin (TF), via the TF C-terminus. Forms a large complex with TF and TbpB.

Its subcellular location is the cell outer membrane. Neisseria acquires iron by extracting it from serum transferrin (TF) in its human host. Acts as a TF receptor and is required for TF utilization. Binds both apo- and holo-TF, via the TF C-terminus. The chain is Transferrin-binding protein A from Neisseria meningitidis serogroup B.